Here is a 208-residue protein sequence, read N- to C-terminus: CASP-like protein 2U9 (208 aa).

The Cytoplasmic segment spans residues 1 to 27; sequence MGVADAPSPGNVPVLGDMKNRSAAEMK. A helical membrane pass occupies residues 28–48; that stretch reads ISVLALRALTLVLLVIALALM. Residues 49-87 lie on the Extracellular side of the membrane; it reads VSNKQTQSIPIKLPGMASTIFLKKTATFSQITGVQYYVG. Residues 88 to 108 form a helical membrane-spanning segment; it reads ALSVAVAYMFFQMLAGLFTIL. The Cytoplasmic segment spans residues 109 to 120; sequence TTGSIVGSKSRA. Residues 121-141 form a helical membrane-spanning segment; that stretch reads WVTFILDQLIAYLMVSAATVV. Over 142-168 the chain is Extracellular; the sequence is AEVGYIARRGETKVGWNQVCSDFKHYC. A helical transmembrane segment spans residues 169-189; sequence FIYGFSLVNAFLATIAFLPVV. Over 190–208 the chain is Cytoplasmic; sequence AVSAFHLFRMYGAQSAQSK.

This sequence belongs to the Casparian strip membrane proteins (CASP) family. Homodimer and heterodimers.

Its subcellular location is the cell membrane. This chain is CASP-like protein 2U9, found in Selaginella moellendorffii (Spikemoss).